Consider the following 485-residue polypeptide: Trk system potassium uptake protein TrkG (485 aa).

The Cytoplasmic portion of the chain corresponds to 1-5 (MNTSH). A helical membrane pass occupies residues 6–32 (VRVVTHMCGFLVWLYSLSMLPPMVVAL). Residues 33-38 (FYKEKS) lie on the Periplasmic side of the membrane. A helical transmembrane segment spans residues 39–60 (LFVFFITFVIFFCIGGGAWYTT). Topologically, residues 61-68 (KKSGIQLR) are cytoplasmic. A helical membrane pass occupies residues 69-93 (TRDGFIIIVMFWILFSVISAFPLWI). The segment at residues 101–112 (FIDALFEGVSGI) is an intramembrane region (helical; Pore-forming). An intramembrane segment occupies 113–118 (TTTGAT). The selectivity filter part 1 stretch occupies residues 113-118 (TTTGAT). Residues Thr114 and Thr115 each coordinate K(+). The Periplasmic portion of the chain corresponds to 119–127 (VIDDVSSLP). A helical transmembrane segment spans residues 128–153 (RAYLYYRSQLNFIGGLGVIVLAVAVL). The Cytoplasmic portion of the chain corresponds to 154–180 (PLLGIGGAKLYQSEMPGPFKDDKLTPR). The helical transmembrane segment at 181–205 (LADTSRTLWITYSLLGIACIVCYRL) threads the bilayer. Residues 206–208 (AGM) lie on the Periplasmic side of the membrane. Pro209 is an intramembrane region. The helical; Pore-forming intramembrane region spans 210–221 (LFDAICHGISTV). An intramembrane segment occupies 222-227 (SLGGFS). A selectivity filter part 2 region spans residues 222-227 (SLGGFS). Positions 223 and 224 each coordinate K(+). The Periplasmic segment spans residues 228–237 (THSESIGYFN). The helical intramembrane region spans 238-253 (NYLVELVAGSFSLLSA). A helical transmembrane segment spans residues 277–297 (LRFFLLIALGVIIVTSFQVWH). The helical; Pore-forming intramembrane region spans 303–318 (LHGSFIHSFFLASSML). An intramembrane segment occupies 319-324 (TDNGLA). A selectivity filter part 3 region spans residues 319–324 (TDNGLA). K(+) is bound by residues Asp320 and Asn321. Residues 325–332 (TQDYASWP) lie on the Periplasmic side of the membrane. Positions 333–344 (THTIVFLLLSSF) form an intramembrane region, helical. An intramembrane region (note=Loop between two helices) is located at residues 345 to 357 (FGGCIGSTCGGIK). A helical membrane pass occupies residues 392-419 (TDRVMRSVWSFFFLYTLFTVFFILVLNG). The Periplasmic portion of the chain corresponds to 420 to 421 (MG). The stretch at 422-423 (YD) is an intramembrane region. The helical; Pore-forming intramembrane region spans 424 to 434 (FLTSFATVAAC). The stretch at 435-441 (INNMGLG) is an intramembrane region. The interval 436 to 441 (NNMGLG) is selectivity filter part 4. Asn437 and Met438 together coordinate K(+). The Periplasmic segment spans residues 442-453 (FGATASSFGVLN). Positions 454 to 465 (DIAKCLMCIAMI) form an intramembrane region, helical.

It belongs to the TrkH potassium transport family.

It localises to the cell inner membrane. In terms of biological role, low-affinity potassium transport system. Interacts with Trk system potassium uptake protein TrkA. Requires TrkE (sapD) for maximal transport activity, low activity is seen in its absence; no further stimulation is seen with SapF. Transport in the absence of SapD is dependent on a high membrane potential and a high cytoplasmic ATP concentration, suggesting this protein may be able to interact with other ATP-binding proteins. Can transport potassium and rubidium. This Escherichia coli (strain K12) protein is Trk system potassium uptake protein TrkG (trkG).